Here is a 360-residue protein sequence, read N- to C-terminus: Photosystem II protein D1 3 (360 aa).

Transmembrane regions (helical) follow at residues 29–46 (YVGW…TATI), 118–133 (HFLL…QWEL), and 142–156 (WICV…AAFA). H118 lines the chlorophyll a pocket. Y126 contributes to the pheophytin a binding site. D170 and E189 together coordinate [CaMn4O5] cluster. Residues 197 to 218 (FHMLGVAGVFGGSLFSAMHGSL) form a helical membrane-spanning segment. H198 is a binding site for chlorophyll a. Residues H215 and 264 to 265 (SF) contribute to the a quinone site. H215 serves as a coordination point for Fe cation. Residue H272 coordinates Fe cation. A helical membrane pass occupies residues 274–288 (FLGAWPVVGIWFTSM). The [CaMn4O5] cluster site is built by H332, E333, D342, and A344. Positions 345–360 (AGEATPVALTAPSIHG) are excised as a propeptide.

It belongs to the reaction center PufL/M/PsbA/D family. As to quaternary structure, PSII is composed of 1 copy each of membrane proteins PsbA, PsbB, PsbC, PsbD, PsbE, PsbF, PsbH, PsbI, PsbJ, PsbK, PsbL, PsbM, PsbT, PsbX, PsbY, PsbZ, Psb30/Ycf12, peripheral proteins PsbO, CyanoQ (PsbQ), PsbU, PsbV and a large number of cofactors. It forms dimeric complexes. The cofactor is The D1/D2 heterodimer binds P680, chlorophylls that are the primary electron donor of PSII, and subsequent electron acceptors. It shares a non-heme iron and each subunit binds pheophytin, quinone, additional chlorophylls, carotenoids and lipids. D1 provides most of the ligands for the Mn4-Ca-O5 cluster of the oxygen-evolving complex (OEC). There is also a Cl(-1) ion associated with D1 and D2, which is required for oxygen evolution. The PSII complex binds additional chlorophylls, carotenoids and specific lipids.. Post-translationally, tyr-161 forms a radical intermediate that is referred to as redox-active TyrZ, YZ or Y-Z. In terms of processing, C-terminally processed by CtpA; processing is essential to allow assembly of the oxygen-evolving complex and thus photosynthetic growth.

The protein localises to the cellular thylakoid membrane. It catalyses the reaction 2 a plastoquinone + 4 hnu + 2 H2O = 2 a plastoquinol + O2. In terms of biological role, photosystem II (PSII) is a light-driven water:plastoquinone oxidoreductase that uses light energy to abstract electrons from H(2)O, generating O(2) and a proton gradient subsequently used for ATP formation. It consists of a core antenna complex that captures photons, and an electron transfer chain that converts photonic excitation into a charge separation. The D1/D2 (PsbA/PsbD) reaction center heterodimer binds P680, the primary electron donor of PSII as well as several subsequent electron acceptors. This chain is Photosystem II protein D1 3, found in Synechococcus sp. (strain ATCC 27144 / PCC 6301 / SAUG 1402/1) (Anacystis nidulans).